The chain runs to 122 residues: Biogenesis of lysosome-related organelles complex 1 subunit CNL1 (122 aa).

The span at 1–10 (MQDNSSHSRE) shows a compositional bias: basic and acidic residues. Residues 1–21 (MQDNSSHSRESASAGDDPLGI) form a disordered region. Residues 63-95 (ENTIDKNIAKFKELLEKCDTLENHYEMLNQLAI) adopt a coiled-coil conformation.

It belongs to the BLOC1S4 family. As to quaternary structure, component of the biogenesis of lysosome-related organelles complex-1 (BLOC-1) composed of at least BLI1, BLS1, CNL1, KXD1, SNN1 and VAB2.

It localises to the cytoplasm. Its function is as follows. Component of the biogenesis of lysosome-related organelles complex-1 (BLOC-1), a complex that is involved in endosomal cargo sorting. The sequence is that of Biogenesis of lysosome-related organelles complex 1 subunit CNL1 (CLN1) from Saccharomyces cerevisiae (strain RM11-1a) (Baker's yeast).